The primary structure comprises 430 residues: Adenylosuccinate synthetase (430 aa).

Residues G13–K19 and G41–T43 each bind GTP. D14 functions as the Proton acceptor in the catalytic mechanism. Mg(2+) contacts are provided by D14 and G41. IMP-binding positions include D14 to K17, N39 to H42, T130, R144, Q225, T240, and R304. The Proton donor role is filled by H42. Substrate is bound at residue S300 to R306. Residues R306, K332 to D334, and S414 to G416 each bind GTP.

It belongs to the adenylosuccinate synthetase family. Homodimer. It depends on Mg(2+) as a cofactor.

It localises to the cytoplasm. It carries out the reaction IMP + L-aspartate + GTP = N(6)-(1,2-dicarboxyethyl)-AMP + GDP + phosphate + 2 H(+). Its pathway is purine metabolism; AMP biosynthesis via de novo pathway; AMP from IMP: step 1/2. Functionally, plays an important role in the de novo pathway of purine nucleotide biosynthesis. Catalyzes the first committed step in the biosynthesis of AMP from IMP. The sequence is that of Adenylosuccinate synthetase from Azotobacter vinelandii (strain DJ / ATCC BAA-1303).